The sequence spans 629 residues: Phosphomethylpyrimidine synthase (629 aa).

Positions 1-30 (MTTKLKNASNLSESAQVDQQSVQPFTRSQK) are disordered. Residues asparagine 233, methionine 262, tyrosine 291, histidine 327, 347 to 349 (SRG), 388 to 391 (DGLR), and glutamate 427 contribute to the substrate site. Residue histidine 431 participates in Zn(2+) binding. Tyrosine 454 lines the substrate pocket. Histidine 495 contributes to the Zn(2+) binding site. Residues cysteine 575, cysteine 578, and cysteine 583 each contribute to the [4Fe-4S] cluster site.

It belongs to the ThiC family. In terms of assembly, homodimer. [4Fe-4S] cluster is required as a cofactor.

The enzyme catalyses 5-amino-1-(5-phospho-beta-D-ribosyl)imidazole + S-adenosyl-L-methionine = 4-amino-2-methyl-5-(phosphooxymethyl)pyrimidine + CO + 5'-deoxyadenosine + formate + L-methionine + 3 H(+). Its pathway is cofactor biosynthesis; thiamine diphosphate biosynthesis. In terms of biological role, catalyzes the synthesis of the hydroxymethylpyrimidine phosphate (HMP-P) moiety of thiamine from aminoimidazole ribotide (AIR) in a radical S-adenosyl-L-methionine (SAM)-dependent reaction. This chain is Phosphomethylpyrimidine synthase, found in Pseudomonas fluorescens (strain ATCC BAA-477 / NRRL B-23932 / Pf-5).